The following is a 376-amino-acid chain: Natterin-2 (376 aa).

Positions 1–18 (MNLSVLLVTLLLLSWTSA) are cleaved as a signal peptide. Residues 19–27 (EKDLKVRVA) constitute a propeptide that is removed on maturation.

It belongs to the natterin family. Post-translationally, contains 4 disulfide bonds. Expressed by the venom gland.

It is found in the secreted. Inhibited by tissue-kallikrein inhibitor TKI and trasylol. Plasma kallikrein inhibitor PKSI527 and classical inhibitors of serine-, metallo-, thiol- or aspartate-peptidases evokes a minor inhibition of the peptide digestion. Functionally, shows nociceptive, edema-inducing and kininogenase activity with release of kallidin from low molecular weight kininogen. The cleavage occurs at Met-Lys bonds. The polypeptide is Natterin-2 (Thalassophryne nattereri (Copper Joe toadfish)).